The primary structure comprises 23 residues: Elongation factor Tu (23 aa).

The protein belongs to the GTP-binding elongation factor family. EF-Tu/EF-1A subfamily. As to quaternary structure, monomer. In terms of processing, the N-terminus is blocked. The C-terminus may be subjected to proteolysis.

It is found in the cytoplasm. In terms of biological role, this protein promotes the GTP-dependent binding of aminoacyl-tRNA to the A-site of ribosomes during protein biosynthesis. The protein is Elongation factor Tu (tuf) of Delftia acidovorans (Pseudomonas acidovorans).